We begin with the raw amino-acid sequence, 273 residues long: NAD(P)H-hydrate epimerase (273 aa).

Positions Ala18–Glu257 constitute a YjeF N-terminal domain. Asn71–Asp75 contributes to the (6S)-NADPHX binding site. K(+)-binding residues include Asn72 and Asp146. Residues Gly150–Pro157, Tyr162, and Asp188 each bind (6S)-NADPHX. Position 191 (Ser191) interacts with K(+).

It belongs to the NnrE/AIBP family. Requires K(+) as cofactor.

The catalysed reaction is (6R)-NADHX = (6S)-NADHX. It carries out the reaction (6R)-NADPHX = (6S)-NADPHX. Its function is as follows. Catalyzes the epimerization of the S- and R-forms of NAD(P)HX, a damaged form of NAD(P)H that is a result of enzymatic or heat-dependent hydration. This is a prerequisite for the S-specific NAD(P)H-hydrate dehydratase to allow the repair of both epimers of NAD(P)HX. The chain is NAD(P)H-hydrate epimerase from Giardia intestinalis (strain ATCC 50803 / WB clone C6) (Giardia lamblia).